Here is a 395-residue protein sequence, read N- to C-terminus: Phosphoglycerate kinase (395 aa).

Residues 22 to 24, Arg-37, 60 to 63, Arg-116, and Arg-149 each bind substrate; these read DLN and HFGR. ATP-binding positions include Lys-199, Glu-322, and 352 to 355; that span reads GGDT.

The protein belongs to the phosphoglycerate kinase family. Monomer.

The protein resides in the cytoplasm. It carries out the reaction (2R)-3-phosphoglycerate + ATP = (2R)-3-phospho-glyceroyl phosphate + ADP. The protein operates within carbohydrate degradation; glycolysis; pyruvate from D-glyceraldehyde 3-phosphate: step 2/5. In Novosphingobium aromaticivorans (strain ATCC 700278 / DSM 12444 / CCUG 56034 / CIP 105152 / NBRC 16084 / F199), this protein is Phosphoglycerate kinase.